Reading from the N-terminus, the 148-residue chain is CDC25-like phosphatase YCH1 (148 aa).

N-acetylmethionine is present on methionine 1. Residues 29–137 (LREPFQVVDV…WQSVYGDDES (109 aa)) form the Rhodanese domain.

Belongs to the MPI phosphatase family.

The protein localises to the cytoplasm. Its subcellular location is the nucleus. In terms of biological role, protein phosphatase. The protein is CDC25-like phosphatase YCH1 (YCH1) of Saccharomyces cerevisiae (strain ATCC 204508 / S288c) (Baker's yeast).